Consider the following 572-residue polypeptide: Moesin/ezrin/radixin homolog 1 (572 aa).

In terms of domain architecture, FERM spans 1-291 (MNVRVTTMDA…GNHELYMRRR (291 aa)). Positions 456 to 491 (TTTPSHHHVEEEEEMDNEEELVNGENGNQDFSKDFD) are disordered. Residues 466–477 (EEEEMDNEEELV) show a composition bias toward acidic residues. T553 is subject to Phosphothreonine.

Interacts with cytoskeletal actin.

Its subcellular location is the cell junction. The protein localises to the adherens junction. The protein resides in the cell projection. It is found in the microvillus. It localises to the rhabdomere. Its subcellular location is the cell membrane. The protein localises to the cytoplasm. The protein resides in the cytoskeleton. Functionally, involved in connections of major cytoskeletal structures to the plasma membrane. This Culex quinquefasciatus (Southern house mosquito) protein is Moesin/ezrin/radixin homolog 1.